A 314-amino-acid chain; its full sequence is 2-methoxy-6-polyprenyl-1,4-benzoquinol methylase, mitochondrial (314 aa).

Residues 1 to 19 (MLQSLNRSVRYLSTSIGSR) constitute a mitochondrion transit peptide. Residues T109, D154, 186–187 (NS), and S203 each bind S-adenosyl-L-methionine.

It belongs to the class I-like SAM-binding methyltransferase superfamily. MenG/UbiE family. As to quaternary structure, component of a multi-subunit COQ enzyme complex.

It is found in the mitochondrion inner membrane. It carries out the reaction a 2-methoxy-6-(all-trans-polyprenyl)benzene-1,4-diol + S-adenosyl-L-methionine = a 5-methoxy-2-methyl-3-(all-trans-polyprenyl)benzene-1,4-diol + S-adenosyl-L-homocysteine + H(+). It functions in the pathway cofactor biosynthesis; ubiquinone biosynthesis. Its function is as follows. Methyltransferase required for the conversion of 2-polyprenyl-6-methoxy-1,4-benzoquinol (DDMQH2) to 2-polyprenyl-3-methyl-6-methoxy-1,4-benzoquinol (DMQH2). The polypeptide is 2-methoxy-6-polyprenyl-1,4-benzoquinol methylase, mitochondrial (Dictyostelium discoideum (Social amoeba)).